We begin with the raw amino-acid sequence, 486 residues long: Protein DETOXIFICATION 53 (486 aa).

Transmembrane regions (helical) follow at residues 15 to 35 (CPIV…MWFL), 45 to 65 (GGAL…KGLS), 94 to 114 (LLIV…PIFL), 130 to 150 (MLFF…RTFL), 159 to 179 (LTIS…VFVV), 187 to 207 (GVAI…LVYT), 240 to 260 (AISV…CGLL), 267 to 287 (VAAM…PFAI), 312 to 332 (VIGL…VTAL), 346 to 366 (ILGL…GNSP), 386 to 406 (VNLC…TFGF), and 413 to 433 (LWFG…YTLI). A disordered region spans residues 448–474 (TSAAADKSHSEDETVHAEVQDDDDVSS). A compositionally biased stretch (basic and acidic residues) spans 453 to 466 (DKSHSEDETVHAEV).

This sequence belongs to the multi antimicrobial extrusion (MATE) (TC 2.A.66.1) family.

It localises to the membrane. The sequence is that of Protein DETOXIFICATION 53 from Arabidopsis thaliana (Mouse-ear cress).